We begin with the raw amino-acid sequence, 532 residues long: Nectin-4 (532 aa).

An N-terminal signal peptide occupies residues 1–30 (MGPLHGALLPPISVTVSLLILLLCAPGGRC). An Ig-like V-type domain is found at 31-142 (GVVHTEKSMT…GNFDAELELK (112 aa)). Over 31 to 344 (GVVHTEKSMT…TKIDLVSVSL (314 aa)) the chain is Extracellular. 3 disulfide bridges follow: cysteine 51–cysteine 125, cysteine 169–cysteine 221, and cysteine 266–cysteine 312. 2 consecutive Ig-like C2-type domains span residues 146–235 (PPLP…KRIT) and 244–328 (AEVS…AIVS). The interval 152–179 (GPGPPLTEGEGKSLAASCTAEGNPAPTL) is disordered. Residues asparagine 189 and asparagine 282 are each glycosylated (N-linked (GlcNAc...) asparagine). A helical membrane pass occupies residues 345–365 (GSVGILTAVLLVVLVITLLLV). The Cytoplasmic segment spans residues 366–532 (NRHHKRQTKQ…IYINGRGHLV (167 aa)). The interval 453–491 (QTELLSTVPDEEVKEDGEEPEQVEQSLEKEPNPTEPDGM) is disordered. Residues 461-474 (PDEEVKEDGEEPEQ) are compositionally biased toward acidic residues.

Belongs to the nectin family.

It localises to the cell membrane. Functionally, may be involved in cell adhesion. In Xenopus tropicalis (Western clawed frog), this protein is Nectin-4.